The following is a 129-amino-acid chain: ATP synthase epsilon chain (129 aa).

Belongs to the ATPase epsilon chain family. As to quaternary structure, F-type ATPases have 2 components, CF(1) - the catalytic core - and CF(0) - the membrane proton channel. CF(1) has five subunits: alpha(3), beta(3), gamma(1), delta(1), epsilon(1). CF(0) has three main subunits: a, b and c.

The protein resides in the cell inner membrane. In terms of biological role, produces ATP from ADP in the presence of a proton gradient across the membrane. The protein is ATP synthase epsilon chain of Campylobacter fetus subsp. fetus (strain 82-40).